The sequence spans 63 residues: Large ribosomal subunit protein bL28 (63 aa).

Belongs to the bacterial ribosomal protein bL28 family.

In Geotalea uraniireducens (strain Rf4) (Geobacter uraniireducens), this protein is Large ribosomal subunit protein bL28.